A 257-amino-acid polypeptide reads, in one-letter code: NAD-capped RNA hydrolase NudC (257 aa).

Arginine 69 contributes to the substrate binding site. 2 residues coordinate Zn(2+): cysteine 98 and cysteine 101. Substrate is bound at residue glutamate 111. Zn(2+)-binding residues include cysteine 116 and cysteine 119. A substrate-binding site is contributed by tyrosine 124. One can recognise a Nudix hydrolase domain in the interval 125–248 (PQIAPCIIVA…TVARRLIEDT (124 aa)). The a divalent metal cation site is built by alanine 158, glutamate 174, and glutamate 178. A Nudix box motif is present at residues 159-180 (GFVEVGETLEQAVAREVMEESG). Substrate is bound at residue 192–199 (QPWPFPQS). Position 219 (glutamate 219) interacts with a divalent metal cation. Residue alanine 241 coordinates substrate.

The protein belongs to the Nudix hydrolase family. NudC subfamily. As to quaternary structure, homodimer. Mg(2+) is required as a cofactor. Mn(2+) serves as cofactor. The cofactor is Zn(2+).

The catalysed reaction is a 5'-end NAD(+)-phospho-ribonucleoside in mRNA + H2O = a 5'-end phospho-adenosine-phospho-ribonucleoside in mRNA + beta-nicotinamide D-ribonucleotide + 2 H(+). The enzyme catalyses NAD(+) + H2O = beta-nicotinamide D-ribonucleotide + AMP + 2 H(+). It catalyses the reaction NADH + H2O = reduced beta-nicotinamide D-ribonucleotide + AMP + 2 H(+). Functionally, mRNA decapping enzyme that specifically removes the nicotinamide adenine dinucleotide (NAD) cap from a subset of mRNAs by hydrolyzing the diphosphate linkage to produce nicotinamide mononucleotide (NMN) and 5' monophosphate mRNA. The NAD-cap is present at the 5'-end of some mRNAs and stabilizes RNA against 5'-processing. Has preference for mRNAs with a 5'-end purine. Catalyzes the hydrolysis of a broad range of dinucleotide pyrophosphates. The polypeptide is NAD-capped RNA hydrolase NudC (Salmonella schwarzengrund (strain CVM19633)).